The sequence spans 238 residues: Aspartate/glutamate leucyltransferase (238 aa).

Belongs to the R-transferase family. Bpt subfamily.

It localises to the cytoplasm. It catalyses the reaction N-terminal L-glutamyl-[protein] + L-leucyl-tRNA(Leu) = N-terminal L-leucyl-L-glutamyl-[protein] + tRNA(Leu) + H(+). The enzyme catalyses N-terminal L-aspartyl-[protein] + L-leucyl-tRNA(Leu) = N-terminal L-leucyl-L-aspartyl-[protein] + tRNA(Leu) + H(+). Its function is as follows. Functions in the N-end rule pathway of protein degradation where it conjugates Leu from its aminoacyl-tRNA to the N-termini of proteins containing an N-terminal aspartate or glutamate. The sequence is that of Aspartate/glutamate leucyltransferase from Shewanella sp. (strain MR-7).